Reading from the N-terminus, the 58-residue chain is Large ribosomal subunit protein uL30 (58 aa).

The protein belongs to the universal ribosomal protein uL30 family. As to quaternary structure, part of the 50S ribosomal subunit.

The protein is Large ribosomal subunit protein uL30 of Pseudomonas fluorescens (strain ATCC BAA-477 / NRRL B-23932 / Pf-5).